The primary structure comprises 274 residues: 2,3,4,5-tetrahydropyridine-2,6-dicarboxylate N-succinyltransferase (274 aa).

Residues R106 and D143 each coordinate substrate.

This sequence belongs to the transferase hexapeptide repeat family. Homotrimer.

The protein resides in the cytoplasm. It carries out the reaction (S)-2,3,4,5-tetrahydrodipicolinate + succinyl-CoA + H2O = (S)-2-succinylamino-6-oxoheptanedioate + CoA. It participates in amino-acid biosynthesis; L-lysine biosynthesis via DAP pathway; LL-2,6-diaminopimelate from (S)-tetrahydrodipicolinate (succinylase route): step 1/3. In Rickettsia felis (strain ATCC VR-1525 / URRWXCal2) (Rickettsia azadi), this protein is 2,3,4,5-tetrahydropyridine-2,6-dicarboxylate N-succinyltransferase.